The chain runs to 504 residues: uncharacterized protein (504 aa).

The propeptide occupies 1-212 (MFMKSKAAGS…LYKTQDPVLD (212 aa)).

This is an uncharacterized protein from Deinococcus radiodurans (strain ATCC 13939 / DSM 20539 / JCM 16871 / CCUG 27074 / LMG 4051 / NBRC 15346 / NCIMB 9279 / VKM B-1422 / R1).